Consider the following 199-residue polypeptide: Large ribosomal subunit protein uL13A (199 aa).

Position 2 is an N-acetylserine (S2). A Glycyl lysine isopeptide (Lys-Gly) (interchain with G-Cter in ubiquitin) cross-link involves residue K177.

It belongs to the universal ribosomal protein uL13 family. As to quaternary structure, component of the large ribosomal subunit (LSU). Mature yeast ribosomes consist of a small (40S) and a large (60S) subunit. The 40S small subunit contains 1 molecule of ribosomal RNA (18S rRNA) and 33 different proteins (encoded by 57 genes). The large 60S subunit contains 3 rRNA molecules (25S, 5.8S and 5S rRNA) and 46 different proteins (encoded by 81 genes). In terms of processing, N-terminally acetylated by acetyltransferase NatA.

Its subcellular location is the cytoplasm. Component of the ribosome, a large ribonucleoprotein complex responsible for the synthesis of proteins in the cell. The small ribosomal subunit (SSU) binds messenger RNAs (mRNAs) and translates the encoded message by selecting cognate aminoacyl-transfer RNA (tRNA) molecules. The large subunit (LSU) contains the ribosomal catalytic site termed the peptidyl transferase center (PTC), which catalyzes the formation of peptide bonds, thereby polymerizing the amino acids delivered by tRNAs into a polypeptide chain. The nascent polypeptides leave the ribosome through a tunnel in the LSU and interact with protein factors that function in enzymatic processing, targeting, and the membrane insertion of nascent chains at the exit of the ribosomal tunnel. The protein is Large ribosomal subunit protein uL13A of Saccharomyces cerevisiae (strain ATCC 204508 / S288c) (Baker's yeast).